The following is a 293-amino-acid chain: MKRVILFLITNLAVMLVLSATLRILGLDRFITAEGLNLNALLMFSLVVGFTGSFISLLISKPMAKYSTGAQVIDPNAPRSQREAWLLDTVYQLADRAGIGRPEVAIYEGAPNAFATGAFKNDALVAVSTGLLESMREEEVAAVLGHEVAHIANGDMVTLTLIQGVVNTFVVFLARVVGYFVDRTIFRTERGVGPGYYVTVIVCEIVFGVLASIIVAWFSRQREYRADAGAAQLLGAREPMIHALARLGGLEPGDLPKSFQASGIAGGGAISALFSSHPPIPARIAALQQMRLS.

2 helical membrane passes run 4 to 24 (VILF…TLRI) and 40 to 60 (ALLM…LLIS). Position 146 (histidine 146) interacts with Zn(2+). Glutamate 147 is a catalytic residue. Residue histidine 150 coordinates Zn(2+). 2 helical membrane passes run 161-181 (LIQG…GYFV) and 198-218 (VTVI…VAWF). Glutamate 223 is a binding site for Zn(2+).

This sequence belongs to the peptidase M48B family. Requires Zn(2+) as cofactor.

It localises to the cell inner membrane. The chain is Protease HtpX homolog from Bordetella avium (strain 197N).